The chain runs to 487 residues: N-succinylglutamate 5-semialdehyde dehydrogenase (487 aa).

Residue 221 to 226 (GSSDTG) participates in NAD(+) binding. Catalysis depends on residues Glu-244 and Cys-278.

It belongs to the aldehyde dehydrogenase family. AstD subfamily.

It carries out the reaction N-succinyl-L-glutamate 5-semialdehyde + NAD(+) + H2O = N-succinyl-L-glutamate + NADH + 2 H(+). It functions in the pathway amino-acid degradation; L-arginine degradation via AST pathway; L-glutamate and succinate from L-arginine: step 4/5. Catalyzes the NAD-dependent reduction of succinylglutamate semialdehyde into succinylglutamate. The polypeptide is N-succinylglutamate 5-semialdehyde dehydrogenase (Burkholderia ambifaria (strain MC40-6)).